The primary structure comprises 283 residues: ATP phosphoribosyltransferase (283 aa).

Belongs to the ATP phosphoribosyltransferase family. Long subfamily. It depends on Mg(2+) as a cofactor.

The protein resides in the cytoplasm. The catalysed reaction is 1-(5-phospho-beta-D-ribosyl)-ATP + diphosphate = 5-phospho-alpha-D-ribose 1-diphosphate + ATP. It participates in amino-acid biosynthesis; L-histidine biosynthesis; L-histidine from 5-phospho-alpha-D-ribose 1-diphosphate: step 1/9. Feedback inhibited by histidine. In terms of biological role, catalyzes the condensation of ATP and 5-phosphoribose 1-diphosphate to form N'-(5'-phosphoribosyl)-ATP (PR-ATP). Has a crucial role in the pathway because the rate of histidine biosynthesis seems to be controlled primarily by regulation of HisG enzymatic activity. This is ATP phosphoribosyltransferase from Phocaeicola vulgatus (strain ATCC 8482 / DSM 1447 / JCM 5826 / CCUG 4940 / NBRC 14291 / NCTC 11154) (Bacteroides vulgatus).